Consider the following 300-residue polypeptide: Alpha-ketoglutarate-dependent dioxygenase alkB homolog 4 (300 aa).

Residue Ala2 is modified to N-acetylalanine. Residues 148–272 form the Fe2OG dioxygenase domain; sequence PVEQCNLDYS…RVCATFRELS (125 aa). Fe cation-binding residues include His167, Asp169, and His252. Residue Arg263 participates in 2-oxoglutarate binding.

It belongs to the alkB family. As to quaternary structure, interacts with ZFHX3, MLLT3, MLLT1, HSF4, EP300, TES, EIF3C, MTMR6 and PSMA6. Fe(2+) serves as cofactor.

It is found in the cytoplasm. Its subcellular location is the nucleus. The protein resides in the nucleolus. The protein localises to the midbody. The catalysed reaction is an N(6)-methyl-2'-deoxyadenosine in DNA + 2-oxoglutarate + O2 = a 2'-deoxyadenosine in DNA + formaldehyde + succinate + CO2. The enzyme catalyses N(6)-methyl-L-lysyl-[protein] + 2-oxoglutarate + O2 = L-lysyl-[protein] + formaldehyde + succinate + CO2. Its function is as follows. Dioxygenase that mediates demethylation of actin monomethylated at 'Lys-84' (K84me1), thereby acting as a regulator of actomyosin-processes. Demethylation of actin K84me1 is required for maintaining actomyosin dynamics supporting normal cleavage furrow ingression during cytokinesis and cell migration. In addition to proteins, also demethylates DNA: specifically demethylates DNA methylated on the 6th position of adenine (N(6)-methyladenosine) DNA, thereby regulating Polycomb silencing. In Mus musculus (Mouse), this protein is Alpha-ketoglutarate-dependent dioxygenase alkB homolog 4.